Consider the following 463-residue polypeptide: Glutamate--tRNA ligase 1 (463 aa).

A 'HIGH' region motif is present at residues 10–20; sequence PSPTGYLHIGG. A 'KMSKS' region motif is present at residues 238 to 242; sequence KLSKR. An ATP-binding site is contributed by Lys241.

This sequence belongs to the class-I aminoacyl-tRNA synthetase family. Glutamate--tRNA ligase type 1 subfamily. In terms of assembly, monomer.

The protein resides in the cytoplasm. The enzyme catalyses tRNA(Glu) + L-glutamate + ATP = L-glutamyl-tRNA(Glu) + AMP + diphosphate. Functionally, catalyzes the attachment of glutamate to tRNA(Glu) in a two-step reaction: glutamate is first activated by ATP to form Glu-AMP and then transferred to the acceptor end of tRNA(Glu). The chain is Glutamate--tRNA ligase 1 from Helicobacter pylori (strain ATCC 700392 / 26695) (Campylobacter pylori).